We begin with the raw amino-acid sequence, 298 residues long: MQNRFLESITQLDKPLANALVPLLHDQFCGHIDASQFAGLVKASGKTEQQVLMDLLPIAAALANPPISEFYVGAIAKGSSGDLYMGANLELPGEALFHSVHAEQSAISHAWLSGETEIVDIIVNFSPCGHCRQFMNELVNGSKINIHLPNQETQTLAHYLPYAFGPSDLDVTVPLLCKREQEFNCDSDDPMIIEAIDQMGLSYAPYTNNNAAVVLETNDGATFCGRYAESAAFNPSMQPMQMALSNLIRNNRQYSEIKRAVLVESSVGKITLVGAAMDALHAIAPIELQHMVVEPLLG.

2 CMP/dCMP-type deaminase domains span residues 47 to 167 and 186 to 298; these read TEQQ…FGPS and DSDD…PLLG. Substrate is bound at residue 88-90; it reads NLE. Residue H101 participates in Zn(2+) binding. E103 serves as the catalytic Proton donor. Zn(2+) is bound by residues C128 and C131.

Belongs to the cytidine and deoxycytidylate deaminase family. In terms of assembly, homodimer. Zn(2+) is required as a cofactor.

It catalyses the reaction cytidine + H2O + H(+) = uridine + NH4(+). The enzyme catalyses 2'-deoxycytidine + H2O + H(+) = 2'-deoxyuridine + NH4(+). Functionally, this enzyme scavenges exogenous and endogenous cytidine and 2'-deoxycytidine for UMP synthesis. The chain is Cytidine deaminase from Shewanella frigidimarina (strain NCIMB 400).